The chain runs to 245 residues: Adenosylcobinamide-GDP ribazoletransferase (245 aa).

The next 5 helical transmembrane spans lie at 35–55 (WFPL…ALGL), 108–128 (IGAF…IGAH), 137–157 (GVLI…AALV), 176–196 (IAIG…TPAI), and 197–217 (TTVT…HLAR).

This sequence belongs to the CobS family. The cofactor is Mg(2+).

Its subcellular location is the cell inner membrane. The catalysed reaction is alpha-ribazole + adenosylcob(III)inamide-GDP = adenosylcob(III)alamin + GMP + H(+). It catalyses the reaction alpha-ribazole 5'-phosphate + adenosylcob(III)inamide-GDP = adenosylcob(III)alamin 5'-phosphate + GMP + H(+). Its pathway is cofactor biosynthesis; adenosylcobalamin biosynthesis; adenosylcobalamin from cob(II)yrinate a,c-diamide: step 7/7. Joins adenosylcobinamide-GDP and alpha-ribazole to generate adenosylcobalamin (Ado-cobalamin). Also synthesizes adenosylcobalamin 5'-phosphate from adenosylcobinamide-GDP and alpha-ribazole 5'-phosphate. This chain is Adenosylcobinamide-GDP ribazoletransferase, found in Nitratidesulfovibrio vulgaris (strain ATCC 29579 / DSM 644 / CCUG 34227 / NCIMB 8303 / VKM B-1760 / Hildenborough) (Desulfovibrio vulgaris).